Here is a 251-residue protein sequence, read N- to C-terminus: GTP cyclohydrolase 1 type 2 homolog (251 aa).

Residues His64, His65, Asp102, His219, and Glu223 each coordinate a divalent metal cation.

This sequence belongs to the GTP cyclohydrolase I type 2/NIF3 family. As to quaternary structure, homohexamer.

The protein is GTP cyclohydrolase 1 type 2 homolog of Chlamydia muridarum (strain MoPn / Nigg).